Consider the following 255-residue polypeptide: Uracil-DNA glycosylase (255 aa).

The interval 1–20 is disordered; sequence MFSASTTPEQPLGLSGDATP. The Proton acceptor role is filled by Asp99.

Belongs to the uracil-DNA glycosylase (UDG) superfamily. UNG family.

The protein resides in the host nucleus. The catalysed reaction is Hydrolyzes single-stranded DNA or mismatched double-stranded DNA and polynucleotides, releasing free uracil.. Excises uracil residues from the DNA which can arise as a result of misincorporation of dUMP residues by DNA polymerase or deamination of cytosines. Therefore may reduce deleterious uracil incorporation into the viral genome, particularly in terminally differentiated cells which lack DNA repair enzymes. The sequence is that of Uracil-DNA glycosylase from Human herpesvirus 2 (strain HG52) (HHV-2).